The primary structure comprises 344 residues: KRR1 small subunit processome component homolog (344 aa).

Positions 126-194 constitute a KH domain; sequence DIIKIGNLVH…VRDIVLDTMN (69 aa). Over residues 230 to 246 the composition is skewed to basic residues; it reads KNKNISKRKQPKNKKPK. A disordered region spans residues 230–326; the sequence is KNKNISKRKQ…KRAAEDNKVD (97 aa). Positions 271–344 form a coiled coil; the sequence is FLNKEQKQAK…MKANKKKERS (74 aa). The span at 272-303 shows a compositional bias: basic and acidic residues; sequence LNKEQKQAKRQQERTAKQAEAAKKQDERRNKD.

Belongs to the KRR1 family. Monomer. Component of the ribosomal small subunit (SSU) processome.

It localises to the nucleus. The protein resides in the nucleolus. In terms of biological role, required for 40S ribosome biogenesis. Involved in nucleolar processing of pre-18S ribosomal RNA and ribosome assembly. Binds to RNA. Required for female germline development, cell viability during eye development and for survival of dividing cells and epithelial cells during early wing disk development. This chain is KRR1 small subunit processome component homolog, found in Drosophila mojavensis (Fruit fly).